The primary structure comprises 471 residues: Monocarboxylate transporter 11 (471 aa).

Positions 1–13 (MPAPQRKHRRGGF) are enriched in basic residues. The tract at residues 1–31 (MPAPQRKHRRGGFSHRCFPTPQTAMTPQPAG) is disordered. Over 1 to 35 (MPAPQRKHRRGGFSHRCFPTPQTAMTPQPAGPPDG) the chain is Cytoplasmic. The segment covering 19 to 28 (PTPQTAMTPQ) has biased composition (low complexity). Transmembrane regions (helical) follow at residues 36 to 56 (GWGW…YGLL), 78 to 98 (AWIS…GSAL), 106 to 126 (PVVM…AFAS), 131 to 151 (LYLG…APAL), 163 to 183 (VLAV…LAPA), 198 to 218 (LLLG…LPLV), 243 to 263 (AFSI…VPYV), 273 to 293 (GLGG…DAGA), 312 to 332 (LAVF…VPVV), 333 to 353 (GGEE…GLSA), 367 to 389 (LVGV…LGGL), and 407 to 427 (ASFL…IGLP). Residues 428-471 (RALPSCGPASPPATPPPETGELLPAPQAVLLSPGGPGSTLDTTC) are Cytoplasmic-facing.

This sequence belongs to the major facilitator superfamily. Monocarboxylate porter (TC 2.A.1.13) family. Interacts with isoform 2 of BSG. In terms of tissue distribution, expressed in liver, salivary gland and thyroid.

It is found in the endoplasmic reticulum membrane. It localises to the cell membrane. It catalyses the reaction pyruvate(out) + H(+)(out) = pyruvate(in) + H(+)(in). Functionally, proton-linked monocarboxylate transporter. It catalyzes the transport of pyruvate across the plasma membrane. Probably involved in hepatic lipid metabolism: overexpression results in an increase of triacylglycerol(TAG) levels, small increases in intracellular diacylglycerols and decreases in lysophosphatidylcholine, cholesterol ester and sphingomyelin lipids. This is Monocarboxylate transporter 11 (SLC16A11) from Homo sapiens (Human).